Reading from the N-terminus, the 278-residue chain is NADPH-dependent 7-cyano-7-deazaguanine reductase (278 aa).

Ile-87–Ser-89 lines the substrate pocket. Ser-89–Lys-90 lines the NADPH pocket. Residue Cys-185 is the Thioimide intermediate of the active site. Asp-192 acts as the Proton donor in catalysis. His-224–Glu-225 lines the substrate pocket. Arg-253–Gly-254 provides a ligand contact to NADPH. The tract at residues Gly-255–Gln-278 is disordered. Over residues Tyr-261 to Gln-278 the composition is skewed to polar residues.

It belongs to the GTP cyclohydrolase I family. QueF type 2 subfamily. In terms of assembly, homodimer.

The protein localises to the cytoplasm. It carries out the reaction 7-aminomethyl-7-carbaguanine + 2 NADP(+) = 7-cyano-7-deazaguanine + 2 NADPH + 3 H(+). It participates in tRNA modification; tRNA-queuosine biosynthesis. In terms of biological role, catalyzes the NADPH-dependent reduction of 7-cyano-7-deazaguanine (preQ0) to 7-aminomethyl-7-deazaguanine (preQ1). The chain is NADPH-dependent 7-cyano-7-deazaguanine reductase from Coxiella burnetii (strain Dugway 5J108-111).